Reading from the N-terminus, the 391-residue chain is Putative gustatory receptor 36a (391 aa).

Over 1–3 (MFD) the chain is Cytoplasmic. Residues 4 to 24 (WVGLLLKVLYYYGQIIGLINF) form a helical membrane-spanning segment. The Extracellular portion of the chain corresponds to 25-38 (EIDWQRGRVVAAQR). Residues 39–59 (GILFAIAINVLICMVLLLQIS) form a helical membrane-spanning segment. The Cytoplasmic portion of the chain corresponds to 60–73 (KKFNLDVYFGRANQ). A helical membrane pass occupies residues 74–94 (LHQYVIIVMVSLRMASGISAI). Topologically, residues 95–126 (LNRWRQRAQLMRLVECVLRLFLKKPHVKQMSR) are extracellular. Residues 127 to 147 (WAILVKFSVGVVSNFLQMAIS) form a helical membrane-spanning segment. Residues 148–165 (MESLDRLGFNEFVGMASD) lie on the Cytoplasmic side of the membrane. A helical transmembrane segment spans residues 166-186 (FWMSAIINMAISQHYLVILFV). The Extracellular portion of the chain corresponds to 187–247 (RAYYHLLKTE…LQSIVTQLNQ (61 aa)). The helical transmembrane segment at 248 to 268 (VFGIQGIMVYGGYYIFSVATT) threads the bilayer. The Cytoplasmic portion of the chain corresponds to 269–290 (YITYSLAINGIEELHLSVRAAA). Residues 291-311 (LVFSWFLFYYTSAILNLFVML) traverse the membrane as a helical segment. The Extracellular segment spans residues 312–391 (KLFDDHKEME…FLIQYDMEYF (80 aa)).

It belongs to the insect chemoreceptor superfamily. Gustatory receptor (GR) family. Gr22e subfamily.

Its subcellular location is the cell membrane. In terms of biological role, probable gustatory receptor which mediates acceptance or avoidance behavior, depending on its substrates. This chain is Putative gustatory receptor 36a (Gr36a), found in Drosophila melanogaster (Fruit fly).